The chain runs to 209 residues: MSNVHVIDHPLVQHKLTLMRKKDASTNSFRRLLGELSTLMAYEVTRDMPLQDIQIETPLETMTGKVIDGKKLVLVSILRAGNGFLDGMLNVVPGARIGHIGLYRDPDTLQPVEYYFKMPSEMAERDIIVVDPMLATGNSAAAAVARLKQLQPRSIKFVCLLAAPEGVATLQKAHPDVPIYTAAIDRELNDHGYILPGLGDAGDRIFGTK.

5-phospho-alpha-D-ribose 1-diphosphate is bound by residues Arg-79, Arg-104, and 131 to 139 (DPMLATGNS). Uracil-binding positions include Ile-194 and 199–201 (GDA). A 5-phospho-alpha-D-ribose 1-diphosphate-binding site is contributed by Asp-200.

The protein belongs to the UPRTase family. Mg(2+) is required as a cofactor.

It carries out the reaction UMP + diphosphate = 5-phospho-alpha-D-ribose 1-diphosphate + uracil. It functions in the pathway pyrimidine metabolism; UMP biosynthesis via salvage pathway; UMP from uracil: step 1/1. Allosterically activated by GTP. Its function is as follows. Catalyzes the conversion of uracil and 5-phospho-alpha-D-ribose 1-diphosphate (PRPP) to UMP and diphosphate. This Acidovorax ebreus (strain TPSY) (Diaphorobacter sp. (strain TPSY)) protein is Uracil phosphoribosyltransferase.